Here is a 544-residue protein sequence, read N- to C-terminus: Probable protein kinase UbiB (544 aa).

The region spanning 123 to 501 (EFDIKPLASA…KRQQATGKFL (379 aa)) is the Protein kinase domain. Residues 129–137 (LASASIAQV) and lysine 152 contribute to the ATP site. The active-site Proton acceptor is aspartate 287. The next 2 membrane-spanning stretches (helical) occupy residues 496–516 (ATGKFLFGVGATLVVCSAILV) and 519–539 (AYEQLSIASGIAGVTFWLLSW).

The protein belongs to the ABC1 family. UbiB subfamily.

Its subcellular location is the cell inner membrane. The protein operates within cofactor biosynthesis; ubiquinone biosynthesis [regulation]. Functionally, is probably a protein kinase regulator of UbiI activity which is involved in aerobic coenzyme Q (ubiquinone) biosynthesis. This Vibrio campbellii (strain ATCC BAA-1116) protein is Probable protein kinase UbiB.